Here is a 193-residue protein sequence, read N- to C-terminus: uncharacterized protein (193 aa).

Positions 55–94 are disordered; sequence PVGGAAGARSLSQALPAPAPPPPPPPGLGPSSERPWPSPW. Residues 71–82 are compositionally biased toward pro residues; that stretch reads APAPPPPPPPGL.

This is an uncharacterized protein from Homo sapiens (Human).